The sequence spans 553 residues: Glutamate--tRNA ligase (553 aa).

A 'HIGH' region motif is present at residues 98–108 (PNPSGPLHIGH).

Belongs to the class-I aminoacyl-tRNA synthetase family. Glutamate--tRNA ligase type 2 subfamily.

The protein localises to the cytoplasm. The catalysed reaction is tRNA(Glu) + L-glutamate + ATP = L-glutamyl-tRNA(Glu) + AMP + diphosphate. Functionally, catalyzes the attachment of glutamate to tRNA(Glu) in a two-step reaction: glutamate is first activated by ATP to form Glu-AMP and then transferred to the acceptor end of tRNA(Glu). The chain is Glutamate--tRNA ligase from Methanocaldococcus jannaschii (strain ATCC 43067 / DSM 2661 / JAL-1 / JCM 10045 / NBRC 100440) (Methanococcus jannaschii).